Here is a 452-residue protein sequence, read N- to C-terminus: Flavanone 7-O-glucoside 2''-O-beta-L-rhamnosyltransferase (452 aa).

Histidine 21 functions as the Proton acceptor in the catalytic mechanism. Histidine 21 provides a ligand contact to an anthocyanidin. Catalysis depends on aspartate 121, which acts as the Charge relay. A helical transmembrane segment spans residues 136–156; the sequence is IAAILFLPLSAVACSFLLHNI. The UDP-beta-L-rhamnose site is built by serine 268, valine 330, histidine 347, glycine 351, serine 352, and glutamate 355. A coiled-coil region spans residues 407-436; that stretch reads KHVVLQEEAKQIRRKANEISESMKKIGDAE.

The protein belongs to the UDP-glycosyltransferase family. Monomer. As to expression, expressed in young fruits and leaves.

Its subcellular location is the membrane. It catalyses the reaction flavanone 7-O-beta-D-glucoside + UDP-beta-L-rhamnose = flavanone 7-O-[alpha-L-rhamnosyl-(1-&gt;2)-beta-D-glucoside] + UDP + H(+). Functionally, involved in the production of the bitter neohesperidosides in citrus. Shows a strict specificity for UDP-rhamnose as donor. This is Flavanone 7-O-glucoside 2''-O-beta-L-rhamnosyltransferase (C12RT1) from Citrus maxima (Pomelo).